The chain runs to 336 residues: Glyceraldehyde-3-phosphate dehydrogenase (336 aa).

NAD(+)-binding positions include 12–13 (RI), D34, and M79. Residues 150–152 (SCT), T181, 210–211 (TG), and R233 contribute to the D-glyceraldehyde 3-phosphate site. Catalysis depends on C151, which acts as the Nucleophile. N316 is a binding site for NAD(+).

The protein belongs to the glyceraldehyde-3-phosphate dehydrogenase family. As to quaternary structure, homotetramer.

It localises to the cytoplasm. The catalysed reaction is D-glyceraldehyde 3-phosphate + phosphate + NAD(+) = (2R)-3-phospho-glyceroyl phosphate + NADH + H(+). Its pathway is carbohydrate degradation; glycolysis; pyruvate from D-glyceraldehyde 3-phosphate: step 1/5. The protein is Glyceraldehyde-3-phosphate dehydrogenase of Echinococcus multilocularis (Fox tapeworm).